We begin with the raw amino-acid sequence, 320 residues long: o-succinylbenzoate synthase (320 aa).

The Proton donor role is filled by Lys-133. Mg(2+) contacts are provided by Asp-161, Glu-190, and Asp-213. Residue Lys-235 is the Proton acceptor of the active site.

It belongs to the mandelate racemase/muconate lactonizing enzyme family. MenC type 1 subfamily. Requires a divalent metal cation as cofactor.

It carries out the reaction (1R,6R)-6-hydroxy-2-succinyl-cyclohexa-2,4-diene-1-carboxylate = 2-succinylbenzoate + H2O. The protein operates within quinol/quinone metabolism; 1,4-dihydroxy-2-naphthoate biosynthesis; 1,4-dihydroxy-2-naphthoate from chorismate: step 4/7. Its pathway is quinol/quinone metabolism; menaquinone biosynthesis. Its function is as follows. Converts 2-succinyl-6-hydroxy-2,4-cyclohexadiene-1-carboxylate (SHCHC) to 2-succinylbenzoate (OSB). This is o-succinylbenzoate synthase from Shigella boydii serotype 18 (strain CDC 3083-94 / BS512).